Here is a 185-residue protein sequence, read N- to C-terminus: Translocon-associated protein subunit gamma (185 aa).

The residue at position 1 (Met-1) is an N-acetylmethionine. Residues 1–27 (MAPKGGSKQQSEEDLLLQDFSRNLSAK) lie on the Lumenal side of the membrane. 2 positions are modified to phosphoserine: Ser-7 and Ser-11. A helical membrane pass occupies residues 28–48 (SSALFFGNAFIVSAIPIWLYW). The Cytoplasmic portion of the chain corresponds to 49–54 (RIWHMD). A helical membrane pass occupies residues 55–76 (LIQSAVLYSVMTLVSTYLVAFA). The Lumenal segment spans residues 77–135 (YKNVKFVLKHKVAQKREDAVSKEVTRKLSEADNRKMSRKEKDERILWKKNEVADYEATT). The residue at position 105 (Ser-105) is a Phosphoserine. The helical transmembrane segment at 136–157 (FSIFYNNTLFLVLVIVASFFIL) threads the bilayer. The Cytoplasmic portion of the chain corresponds to 158-163 (KNFNPT). A helical membrane pass occupies residues 164–184 (VNYILSISASSGLIALLSTGS).

The protein belongs to the TRAP-gamma family. Heterotetramer of TRAP-alpha, TRAP-beta, TRAP-delta and TRAP-gamma.

It localises to the endoplasmic reticulum membrane. TRAP proteins are part of a complex whose function is to bind calcium to the ER membrane and thereby regulate the retention of ER resident proteins. The chain is Translocon-associated protein subunit gamma (Ssr3) from Mus musculus (Mouse).